Consider the following 93-residue polypeptide: Small ribosomal subunit protein uS19 (93 aa).

Belongs to the universal ribosomal protein uS19 family.

Protein S19 forms a complex with S13 that binds strongly to the 16S ribosomal RNA. The sequence is that of Small ribosomal subunit protein uS19 (rpsS) from Thermus thermophilus (strain ATCC BAA-163 / DSM 7039 / HB27).